The following is a 240-amino-acid chain: 7-cyano-7-deazaguanine synthase (240 aa).

An ATP-binding site is contributed by 18 to 28; the sequence is FSGGQDSTTCL. 4 residues coordinate Zn(2+): cysteine 197, cysteine 206, cysteine 209, and cysteine 212.

It belongs to the QueC family. Requires Zn(2+) as cofactor.

The catalysed reaction is 7-carboxy-7-deazaguanine + NH4(+) + ATP = 7-cyano-7-deazaguanine + ADP + phosphate + H2O + H(+). It functions in the pathway purine metabolism; 7-cyano-7-deazaguanine biosynthesis. In terms of biological role, catalyzes the ATP-dependent conversion of 7-carboxy-7-deazaguanine (CDG) to 7-cyano-7-deazaguanine (preQ(0)). The protein is 7-cyano-7-deazaguanine synthase of Shewanella baltica (strain OS223).